The primary structure comprises 629 residues: Polyadenylate-binding protein, cytoplasmic and nuclear (629 aa).

The tract at residues 1 to 47 (MTLENKAEASPATKEETTTEAAPAEGEAKTESSEEKGSKEDQGDNAS) is disordered. Positions 26 to 42 (GEAKTESSEEKGSKEDQ) are enriched in basic and acidic residues. 4 consecutive RRM domains span residues 46 to 124 (ASLY…WSQR), 134 to 211 (GNIY…PHVP), 227 to 304 (TNVF…RAKK), and 330 to 407 (VNLY…LAQR). The tract at residues 465–543 (GANPQMMMRP…RRKDGESRVA (79 aa)) is disordered. Low complexity-rich tracts occupy residues 493-506 (MYGAPPQGYQQGGF) and 514-531 (GGQPPRSGQPGPQGQFRG). One can recognise a PABC domain in the interval 542–624 (VADSISNALE…AITAYNEYLN (83 aa)).

The protein belongs to the polyadenylate-binding protein type-1 family.

Its subcellular location is the cytoplasm. The protein localises to the nucleus. Binds the poly(A) tail of mRNA. Appears to be an important mediator of the multiple roles of the poly(A) tail in mRNA biogenesis, stability and translation. In the nucleus, involved in both mRNA cleavage and polyadenylation. Is also required for efficient mRNA export to the cytoplasm. Acts in concert with a poly(A)-specific nuclease (PAN) to affect poly(A) tail shortening, which may occur concomitantly with either nucleocytoplasmic mRNA transport or translational initiation. In the cytoplasm, stimulates translation initiation and regulates mRNA decay through translation termination-coupled poly(A) shortening, probably mediated by PAN. The sequence is that of Polyadenylate-binding protein, cytoplasmic and nuclear (PAB1) from Yarrowia lipolytica (strain CLIB 122 / E 150) (Yeast).